The following is a 222-amino-acid chain: L-cystine transport system permease protein TcyL (222 aa).

At 1 to 22 the chain is on the periplasmic side; that stretch reads MQESIQLVIDSLPFLLKGAGYT. Positions 19–207 constitute an ABC transmembrane type-1 domain; that stretch reads AGYTLQLSIG…IMATVLSTLQ (189 aa). The helical transmembrane segment at 23–43 threads the bilayer; sequence LQLSIGGMFFGLLLGFILALM. Residues 44 to 64 are Cytoplasmic-facing; that stretch reads RLSPIWPVRWLARFYISIFRG. A helical membrane pass occupies residues 65-85; it reads TPLIAQLFMIYYGLPQFGIEL. At 86–182 the chain is on the periplasmic side; the sequence is DPIPSAMIGL…RQAQLITSRT (97 aa). A helical transmembrane segment spans residues 183 to 203; sequence LEVFTMYLAASLIYWIMATVL. The Cytoplasmic segment spans residues 204–222; the sequence is STLQNHFENQLNRQEREPK.

It belongs to the binding-protein-dependent transport system permease family. HisMQ subfamily. The complex is composed of two ATP-binding proteins (TcyN), two transmembrane proteins (TcyL) and a solute-binding protein (TcyJ).

It is found in the cell inner membrane. Functionally, part of the ABC transporter complex TcyJLN involved in L-cystine import. Responsible for the translocation of the substrate across the membrane. The chain is L-cystine transport system permease protein TcyL from Escherichia coli O6:H1 (strain CFT073 / ATCC 700928 / UPEC).